Reading from the N-terminus, the 201-residue chain is Hydroxymethylphosphonate dioxygenase (201 aa).

Fe cation-binding residues include histidine 47, histidine 71, aspartate 72, histidine 94, histidine 117, and aspartate 174.

Requires Fe(2+) as cofactor.

It carries out the reaction hydroxymethylphosphonate + O2 = formate + phosphate + 2 H(+). The enzyme catalyses (1R)-(2-amino-1-hydroxyethyl)phosphonate + O2 = glycine + phosphate + 2 H(+). It catalyses the reaction (1R)-(1-hydroxyethyl)phosphonate + O2 = acetate + phosphate + 2 H(+). Functionally, part of an oxidative pathway for utilization of methylphosphonic acid as a phosphate source. Catalyzes the oxidation of hydroxymethylphosphonic acid to produce formate and phosphate. Can also use (1R)-(2-amino-1-hydroxyethyl)phosphonic acid and (R)-1-hydroxyethylphosphonic acid with similar catalytic efficiency. The chain is Hydroxymethylphosphonate dioxygenase from Gimesia maris (strain ATCC 29201 / DSM 8797 / 534-30) (Planctomyces maris).